Here is a 762-residue protein sequence, read N- to C-terminus: Coleoptile phototropism protein 1 (762 aa).

Over residues 1–12 (MWESESESHGGE) the composition is skewed to basic and acidic residues. Residues 1–29 (MWESESESHGGERGLVPVGGGGGSGRHEA) are disordered. The BTB domain maps to 51–128 (SDLLVKVGDV…SYGMAVDLTA (78 aa)). Gly residues predominate over residues 227-238 (PAAIRGGGGSGG). 4 disordered regions span residues 227–264 (PAAI…RQAV), 460–495 (MAVA…ASAS), 687–718 (QVDG…AWSS), and 731–762 (GADA…NSIS). The NPH3 domain occupies 268-607 (DWWFEDVSVL…VQVLFTEQVK (340 aa)). A coiled-coil region spans residues 654–691 (AAAKKDINTLKFELESMKAKYLELQHEMDALQKQVDGR). Residues 696-709 (PSPAAAKIGKQQQQ) are compositionally biased toward low complexity. Residues 736–747 (AGGGVAPPGGGE) show a composition bias toward gly residues. The segment covering 752–762 (KGPRRWRNSIS) has biased composition (basic residues).

It belongs to the NPH3 family.

Its pathway is protein modification; protein ubiquitination. Its function is as follows. May act as a substrate-specific adapter of an E3 ubiquitin-protein ligase complex (CUL3-RBX1-BTB) which mediates the ubiquitination and subsequent proteasomal degradation of target proteins. Plays a role as signal transduction component in coleoptile phototropism and lateral translocation of auxin. The polypeptide is Coleoptile phototropism protein 1 (CPT1) (Oryza sativa subsp. japonica (Rice)).